Consider the following 314-residue polypeptide: Glycine--tRNA ligase alpha subunit (314 aa).

Belongs to the class-II aminoacyl-tRNA synthetase family. Tetramer of two alpha and two beta subunits.

It is found in the cytoplasm. The catalysed reaction is tRNA(Gly) + glycine + ATP = glycyl-tRNA(Gly) + AMP + diphosphate. The sequence is that of Glycine--tRNA ligase alpha subunit from Leuconostoc citreum (strain KM20).